Reading from the N-terminus, the 424-residue chain is MTAITDIIAREILDSRGNPTVEVDVLLEDGSFGRAAVPSGASTGAHEAVEMRDGGERYGGKGVLKACDLVEGEIFEAIAGMDAEDQRRIDEAMIELDGTANKSRLGANAMLGVSLAAAHAAADVQGLPLYRYIGGMNARVLPTPMMNIINGGAHADNPIDFQEFMIMPVGLPSFSEALRCGAEVFHALKSRLKADGLNTNVGDEGGFAPHLRSAEQALDVIMDAIEAAGYKPGEDVALALDVASTEFYKDGQYVLEGADESHDAEGFSQYLEKLVNKYPIVSIEDGMAEDDWDGWRALTQRLDGRCQLVGDDLFVTNPERLAKGIETGAANAILVKVNQIGTLSETLDAVDMALRSGYGAVMSHRSGETEDATIADLAVATNCGQIKTGSLARSDRTAKYNQLLRIESLLGETGMFAGPSGLAS.

A (2R)-2-phosphoglycerate-binding site is contributed by Q162. E204 acts as the Proton donor in catalysis. The Mg(2+) site is built by D241, E284, and D311. (2R)-2-phosphoglycerate-binding residues include K336, R365, S366, and K387. K336 (proton acceptor) is an active-site residue.

This sequence belongs to the enolase family. The cofactor is Mg(2+).

The protein resides in the cytoplasm. It is found in the secreted. It localises to the cell surface. It catalyses the reaction (2R)-2-phosphoglycerate = phosphoenolpyruvate + H2O. The protein operates within carbohydrate degradation; glycolysis; pyruvate from D-glyceraldehyde 3-phosphate: step 4/5. Functionally, catalyzes the reversible conversion of 2-phosphoglycerate (2-PG) into phosphoenolpyruvate (PEP). It is essential for the degradation of carbohydrates via glycolysis. This chain is Enolase, found in Maricaulis maris (strain MCS10) (Caulobacter maris).